The chain runs to 477 residues: Proton-coupled amino acid transporter 3 (477 aa).

Residues 1-54 are Cytoplasmic-facing; it reads MGNVPLLREVGKCQRNMFGRSTASSKGSSNSRSSSSTSPKKGPRREADALMFIQ. The span at 19–40 shows a compositional bias: low complexity; it reads GRSTASSKGSSNSRSSSSTSPK. The disordered stretch occupies residues 19 to 43; it reads GRSTASSKGSSNSRSSSSTSPKKGP. Residues 55–75 form a helical membrane-spanning segment; the sequence is IFIHLLKSNIGTGFLGLPLAV. At 76–77 the chain is on the extracellular side; it reads KN. Residues 78-98 form a helical membrane-spanning segment; that stretch reads AGLLVGPVSLLAIGALTVHCM. The Cytoplasmic segment spans residues 99–144; the sequence is DILLNCACHLTQRLQRSFVNYEETTMYSLETCPSPWLRTHSVWGRY. The helical transmembrane segment at 145–165 threads the bilayer; the sequence is VVSFLLIVTQLGFCSVYFMFL. Topologically, residues 166 to 202 are extracellular; sequence ADNLQQIMEEAHFTSNVCQPRQSLVMTSILDTRFYML. A helical membrane pass occupies residues 203-223; it reads TILPFLILLVLIQNPQVLSIF. The Cytoplasmic segment spans residues 224–225; that stretch reads ST. Residues 226–246 form a helical membrane-spanning segment; that stretch reads LATITTLSSLALIFEYLIQTP. Topologically, residues 247–259 are extracellular; it reads HHSNLPLVANWKT. A helical transmembrane segment spans residues 260-280; sequence FLLFFGTAIFTFEGVGMVLPL. Topologically, residues 281 to 291 are cytoplasmic; that stretch reads KSQMKSPQQFP. Residues 292 to 312 form a helical membrane-spanning segment; that stretch reads AVLYLGMSFVIFLYICLGTLG. Over 313-344 the chain is Extracellular; sequence YMKFGTDTQASITLNLPICWLYQSVKLMYSVG. The chain crosses the membrane as a helical span at residues 345-365; the sequence is IFFTYALQFHVPAEIIVPYVV. The Cytoplasmic segment spans residues 366–374; that stretch reads SRVSENWAL. The helical transmembrane segment at 375–395 threads the bilayer; it reads FVDLTVRTALVCLTCFSAVLI. Residues 396–399 lie on the Extracellular side of the membrane; that stretch reads PRLD. A helical membrane pass occupies residues 400–420; that stretch reads LVISLVGSVSSSALAIIIPPL. Residues 421–432 are Cytoplasmic-facing; the sequence is LEIATFYSENIS. The helical transmembrane segment at 433–453 threads the bilayer; it reads CATIVKDIMISILGLLGCVLG. Residues 454–477 are Extracellular-facing; that stretch reads TYQALYEMTQQTHFYMANSTRVHI.

Belongs to the amino acid/polyamine transporter 2 family. As to expression, specifically expressed in testis.

It is found in the membrane. This chain is Proton-coupled amino acid transporter 3 (Slc36a3), found in Mus musculus (Mouse).